Here is a 201-residue protein sequence, read N- to C-terminus: Nuclear protein UL4 (201 aa).

This sequence belongs to the alphaherpesvirinae HHV-1 UL4 family.

It is found in the host nucleus. This is Nuclear protein UL4 from Human herpesvirus 2 (strain HG52) (HHV-2).